A 90-amino-acid polypeptide reads, in one-letter code: Probable Fe(2+)-trafficking protein (90 aa).

This sequence belongs to the Fe(2+)-trafficking protein family.

Could be a mediator in iron transactions between iron acquisition and iron-requiring processes, such as synthesis and/or repair of Fe-S clusters in biosynthetic enzymes. The polypeptide is Probable Fe(2+)-trafficking protein (Methylococcus capsulatus (strain ATCC 33009 / NCIMB 11132 / Bath)).